A 336-amino-acid polypeptide reads, in one-letter code: Putative bifunctional cytochrome c-type biogenesis protein CcmAE (336 aa).

The segment at 1–199 is cytochrome c biogenesis ATP-binding export protein CcmA 2; sequence MLEARDLYCE…ADTVRRLALT (199 aa). Residues 2 to 242 form the ABC transporter domain; the sequence is LEARDLYCER…VGQRLRVGGM (241 aa). 34-41 is an ATP binding site; the sequence is GGNGAGKT. Positions 196-336 are cytochrome c-type biogenesis protein CcmE 2; that stretch reads LALTTALVLY…PQRVDKDTSS (141 aa). Histidine 307 and tyrosine 311 together coordinate heme. A disordered region spans residues 307 to 336; it reads HDENYTPPEVEKAMQENHRRPQRVDKDTSS.

This sequence in the N-terminal section; belongs to the ABC transporter superfamily. CcmA exporter (TC 3.A.1.107) family. The protein in the C-terminal section; belongs to the CcmE/CycJ family.

It localises to the cell inner membrane. It catalyses the reaction heme b(in) + ATP + H2O = heme b(out) + ADP + phosphate + H(+). Functionally, part of the ABC transporter complex CcmAB involved in the biogenesis of c-type cytochromes; once thought to export heme, this seems not to be the case, but its exact role is uncertain. Responsible for energy coupling to the transport system. Its function is as follows. Heme chaperone required for the biogenesis of c-type cytochromes. Transiently binds heme delivered by CcmC and transfers the heme to apo-cytochromes in a process facilitated by CcmF and CcmH. The protein is Putative bifunctional cytochrome c-type biogenesis protein CcmAE (ccmAE) of Salmonella choleraesuis (strain SC-B67).